Reading from the N-terminus, the 300-residue chain is MKNKILKIATRKSQLAICQAQYVHNELKHYHPTLSIELMPIVTTGDKFLNIDAKNKIKKGAFIKELEHALINFRADIAVHSMKDITVPLPDELTLPVLCKRNDPRDAFVSLKYPNIDTLPIGSVIGTSSLRRQCQIRAHRPDLVVSNLRGNIDTRLKKLQYGQYDAIVLAVAGLQRLQLHEYIRVHIDPSDLLPAMGQGVIAIECRSNDADILSLLSPLYHQETSFRVRAERAVTTYLESYCHLPIASYAEIEEDQIWLRALIGLPDGSKIIRTEGRAPLDQAEKLGFILAEDLLIKFKR.

Position 242 is an S-(dipyrrolylmethanemethyl)cysteine (Cys242).

The protein belongs to the HMBS family. In terms of assembly, monomer. The cofactor is dipyrromethane.

The enzyme catalyses 4 porphobilinogen + H2O = hydroxymethylbilane + 4 NH4(+). It participates in porphyrin-containing compound metabolism; protoporphyrin-IX biosynthesis; coproporphyrinogen-III from 5-aminolevulinate: step 2/4. In terms of biological role, tetrapolymerization of the monopyrrole PBG into the hydroxymethylbilane pre-uroporphyrinogen in several discrete steps. This is Porphobilinogen deaminase from Blochmanniella pennsylvanica (strain BPEN).